The following is a 257-amino-acid chain: Putative cysteine-rich repeat secretory protein 28 (257 aa).

A signal peptide spans 1–26 (MFSTFGSVPILTVVAIQLFLIRNVLS). 2 Gnk2-homologous domains span residues 32–136 (AYLH…TVDS) and 142–254 (YEND…LYPF).

The protein belongs to the cysteine-rich repeat secretory protein family.

The protein resides in the secreted. This Arabidopsis thaliana (Mouse-ear cress) protein is Putative cysteine-rich repeat secretory protein 28 (CRRSP28).